Consider the following 200-residue polypeptide: Small ribosomal subunit protein uS4 (200 aa).

A disordered region spans residues 22–42 (TGKELEKRPYAPGPHGPGQRK). One can recognise an S4 RNA-binding domain in the interval 92-155 (ARLDNVVYKL…RNLSIIKESV (64 aa)).

This sequence belongs to the universal ribosomal protein uS4 family. In terms of assembly, part of the 30S ribosomal subunit. Contacts protein S5. The interaction surface between S4 and S5 is involved in control of translational fidelity.

Its function is as follows. One of the primary rRNA binding proteins, it binds directly to 16S rRNA where it nucleates assembly of the body of the 30S subunit. Functionally, with S5 and S12 plays an important role in translational accuracy. The chain is Small ribosomal subunit protein uS4 from Bacillus velezensis (strain DSM 23117 / BGSC 10A6 / LMG 26770 / FZB42) (Bacillus amyloliquefaciens subsp. plantarum).